A 187-amino-acid polypeptide reads, in one-letter code: 1,6-anhydro-N-acetylmuramyl-L-alanine amidase AmpD (187 aa).

The N-acetylmuramoyl-L-alanine amidase domain occupies 29–167 (SLLVVHNISL…TPDRKTDPGP (139 aa)). Zn(2+) is bound at residue His-34. The active-site Proton acceptor is Glu-116. Residues His-154 and Asp-164 each coordinate Zn(2+).

It belongs to the N-acetylmuramoyl-L-alanine amidase 2 family. The cofactor is Zn(2+).

It is found in the cytoplasm. It catalyses the reaction Hydrolyzes the link between N-acetylmuramoyl residues and L-amino acid residues in certain cell-wall glycopeptides.. In terms of biological role, involved in cell wall peptidoglycan recycling. Specifically cleaves the amide bond between the lactyl group of N-acetylmuramic acid and the alpha-amino group of the L-alanine in degradation products containing an anhydro N-acetylmuramyl moiety. This is 1,6-anhydro-N-acetylmuramyl-L-alanine amidase AmpD (ampD) from Salmonella typhimurium (strain LT2 / SGSC1412 / ATCC 700720).